The chain runs to 328 residues: Malate dehydrogenase (328 aa).

16-22 (GAAGQIS) serves as a coordination point for NAD(+). Residues Arg97 and Arg103 each contribute to the substrate site. NAD(+) contacts are provided by residues Asn110, Gln117, and 134–136 (VGN). Residues Asn136 and Arg167 each coordinate substrate. His192 functions as the Proton acceptor in the catalytic mechanism.

It belongs to the LDH/MDH superfamily. MDH type 2 family. As to quaternary structure, homotetramer.

It catalyses the reaction (S)-malate + NAD(+) = oxaloacetate + NADH + H(+). With respect to regulation, citrate activates the enzyme in the oxidation of malate to oxaloacetate and inhibits it in the reverse reaction. In terms of biological role, catalyzes the reversible oxidation of malate to oxaloacetate. Exhibits higher catalytic efficiency for oxaloacetate reduction than for malate oxidation in vitro. Almost equally active both for NADH and NADPH on the bases of the kcat values at pH 6.5, but catalytic efficiency for oxaloacetate reduction is 50-fold higher with NADH. The chain is Malate dehydrogenase from Corynebacterium glutamicum (strain ATCC 13032 / DSM 20300 / JCM 1318 / BCRC 11384 / CCUG 27702 / LMG 3730 / NBRC 12168 / NCIMB 10025 / NRRL B-2784 / 534).